The chain runs to 899 residues: Auxin response factor 25 (899 aa).

The disordered stretch occupies residues 1 to 20 (MKLSPPASADMPQALPENDG). The segment at residues 132–234 (FCKTLTASDT…QLLLGIRRAN (103 aa)) is a DNA-binding region (TF-B3). The segment covering 546-564 (RQHVLQEQSSQEMQQQLPS) has biased composition (low complexity). The segment at 546-586 (RQHVLQEQSSQEMQQQLPSSDHHVADVASESGSAPQAQSSL) is disordered. A compositionally biased stretch (polar residues) spans 575–586 (ESGSAPQAQSSL). The PB1 domain maps to 766–850 (ATFVKVYKSG…WCIKILSPQE (85 aa)).

This sequence belongs to the ARF family. In terms of assembly, homodimers and heterodimers. As to expression, expressed in roots, culms, leaves and young panicles.

The protein localises to the nucleus. Functionally, auxin response factors (ARFs) are transcriptional factors that bind specifically to the DNA sequence 5'-TGTCTC-3' found in the auxin-responsive promoter elements (AuxREs). This is Auxin response factor 25 (ARF25) from Oryza sativa subsp. japonica (Rice).